We begin with the raw amino-acid sequence, 470 residues long: Serine--tRNA ligase (470 aa).

272–274 (TAE) contributes to the L-serine binding site. 303 to 305 (RAE) is an ATP binding site. Glu326 lines the L-serine pocket. Position 393 to 396 (393 to 396 (EISS)) interacts with ATP. Residue Ser428 coordinates L-serine.

The protein belongs to the class-II aminoacyl-tRNA synthetase family. Type-1 seryl-tRNA synthetase subfamily. In terms of assembly, homodimer. The tRNA molecule binds across the dimer.

It is found in the cytoplasm. The catalysed reaction is tRNA(Ser) + L-serine + ATP = L-seryl-tRNA(Ser) + AMP + diphosphate + H(+). It carries out the reaction tRNA(Sec) + L-serine + ATP = L-seryl-tRNA(Sec) + AMP + diphosphate + H(+). It functions in the pathway aminoacyl-tRNA biosynthesis; selenocysteinyl-tRNA(Sec) biosynthesis; L-seryl-tRNA(Sec) from L-serine and tRNA(Sec): step 1/1. Catalyzes the attachment of serine to tRNA(Ser). Is also able to aminoacylate tRNA(Sec) with serine, to form the misacylated tRNA L-seryl-tRNA(Sec), which will be further converted into selenocysteinyl-tRNA(Sec). This chain is Serine--tRNA ligase, found in Nitrobacter hamburgensis (strain DSM 10229 / NCIMB 13809 / X14).